The chain runs to 137 residues: Large ribosomal subunit protein uL16 (137 aa).

It belongs to the universal ribosomal protein uL16 family. As to quaternary structure, part of the 50S ribosomal subunit.

Binds 23S rRNA and is also seen to make contacts with the A and possibly P site tRNAs. The protein is Large ribosomal subunit protein uL16 of Ruegeria pomeroyi (strain ATCC 700808 / DSM 15171 / DSS-3) (Silicibacter pomeroyi).